The sequence spans 393 residues: Proteasome-activating nucleotidase (393 aa).

Residues 14 to 53 (SDEVQLVRLLEEKIKSLQIEIENLRKELNYYKAEMEKMLS) adopt a coiled-coil conformation. Residues 178–183 (GTGKTM) and Y317 contribute to the ATP site. Residues 391 to 393 (KYS) form a docks into pockets in the proteasome alpha-ring to cause gate opening region.

Belongs to the AAA ATPase family. Homohexamer. The hexameric complex has a two-ring architecture resembling a top hat that caps the 20S proteasome core at one or both ends. Upon ATP-binding, the C-terminus of PAN interacts with the alpha-rings of the proteasome core by binding to the intersubunit pockets.

The protein localises to the cytoplasm. Functionally, ATPase which is responsible for recognizing, binding, unfolding and translocation of substrate proteins into the archaeal 20S proteasome core particle. Is essential for opening the gate of the 20S proteasome via an interaction with its C-terminus, thereby allowing substrate entry and access to the site of proteolysis. Thus, the C-termini of the proteasomal ATPase function like a 'key in a lock' to induce gate opening and therefore regulate proteolysis. Unfolding activity requires energy from ATP hydrolysis, whereas ATP binding alone promotes ATPase-20S proteasome association which triggers gate opening, and supports translocation of unfolded substrates. This is Proteasome-activating nucleotidase from Saccharolobus islandicus (strain M.16.27) (Sulfolobus islandicus).